A 309-amino-acid chain; its full sequence is PI-PLC X domain-containing protein 1 (309 aa).

One can recognise a PI-PLC X-box domain in the interval 17 to 193; sequence HMWDIPLWNL…QVILSYDDES (177 aa).

This is PI-PLC X domain-containing protein 1 (plcxd1) from Danio rerio (Zebrafish).